The following is a 609-amino-acid chain: Putative pectinesterase/pectinesterase inhibitor 45 (609 aa).

Residues 25–45 traverse the membrane as a helical segment; it reads IILGVVSVLVVAAAIIGGAFA. Asn51, Asn62, Asn100, Asn114, Asn183, Asn229, Asn296, Asn306, Asn346, and Asn362 each carry an N-linked (GlcNAc...) asparagine glycan. The tract at residues 54–87 is disordered; sequence QEQGKTTNNKSKDSPTKSESPSPKPPSSAAQTVK. Residues 89 to 241 are pectinesterase inhibitor 45; the sequence is GQVDKIIQTL…QVLTSNSLAM (153 aa). Positions 296–593 are pectinesterase 45; the sequence is NATVAKDGSG…FTVGPFLQGE (298 aa). Substrate contacts are provided by Thr371 and Gln401. Residue Asp424 is the Proton donor; for pectinesterase activity of the active site. A disulfide bridge connects residues Cys438 and Cys458. The active-site Nucleophile; for pectinesterase activity is the Asp445. Asn491 is a glycosylation site (N-linked (GlcNAc...) asparagine). 2 residues coordinate substrate: Arg513 and Trp515.

It in the N-terminal section; belongs to the PMEI family. The protein in the C-terminal section; belongs to the pectinesterase family. Expressed in flower buds and pollen.

The protein resides in the membrane. It carries out the reaction [(1-&gt;4)-alpha-D-galacturonosyl methyl ester](n) + n H2O = [(1-&gt;4)-alpha-D-galacturonosyl](n) + n methanol + n H(+). It participates in glycan metabolism; pectin degradation; 2-dehydro-3-deoxy-D-gluconate from pectin: step 1/5. Functionally, acts in the modification of cell walls via demethylesterification of cell wall pectin. The protein is Putative pectinesterase/pectinesterase inhibitor 45 (PME45) of Arabidopsis thaliana (Mouse-ear cress).